The chain runs to 246 residues: Small ribosomal subunit protein uS2 (246 aa).

Belongs to the universal ribosomal protein uS2 family.

The polypeptide is Small ribosomal subunit protein uS2 (Exiguobacterium sp. (strain ATCC BAA-1283 / AT1b)).